Reading from the N-terminus, the 303-residue chain is L(+)-tartrate dehydratase subunit alpha (303 aa).

Residues cysteine 71, cysteine 190, and cysteine 277 each coordinate iron-sulfur cluster.

The protein belongs to the class-I fumarase family. Tetramer of two alpha and two beta subunits. Requires iron-sulfur cluster as cofactor.

The catalysed reaction is (2R,3R)-tartrate = oxaloacetate + H2O. The protein is L(+)-tartrate dehydratase subunit alpha (ttdA) of Escherichia coli O6:H1 (strain CFT073 / ATCC 700928 / UPEC).